Consider the following 148-residue polypeptide: UPF0178 protein CA_C2825 (148 aa).

This sequence belongs to the UPF0178 family.

The chain is UPF0178 protein CA_C2825 from Clostridium acetobutylicum (strain ATCC 824 / DSM 792 / JCM 1419 / IAM 19013 / LMG 5710 / NBRC 13948 / NRRL B-527 / VKM B-1787 / 2291 / W).